We begin with the raw amino-acid sequence, 407 residues long: Probable sodium/metabolite cotransporter BASS5, chloroplastic (407 aa).

A chloroplast-targeting transit peptide spans M1–R57. 9 helical membrane passes run F101–T121, W122–N142, Y162–F184, G191–T213, I222–L242, V252–L272, P286–L306, A317–F337, and L379–V399.

Belongs to the bile acid:sodium symporter (BASS) (TC 2.A.28) family. As to expression, widely expressed.

The protein localises to the membrane. The protein resides in the plastid. It localises to the chloroplast envelope. Its function is as follows. Plastidic transporter involved in the biosynthesis of aliphatic glucosinolates by translocating the biosynthetic intermediates of Met-derived glucosinolates across chloroplast membranes. Transports short chain (C2) alpha-keto acids, such as 4-methylsulfanyl-2-oxobutanoic acid, from the cytosol to the chloroplast where they are subjected to chain elongation cycles. Also functions in the transport of chain-elongated (C3 to C8) Met derivatives from the chloroplast to the cytosol. Does not seem to be involved in the transport of indole-derived glucosinolates. The sequence is that of Probable sodium/metabolite cotransporter BASS5, chloroplastic (BASS5) from Arabidopsis thaliana (Mouse-ear cress).